The chain runs to 149 residues: Large ribosomal subunit protein bL9 (149 aa).

Belongs to the bacterial ribosomal protein bL9 family.

Binds to the 23S rRNA. In Citrobacter koseri (strain ATCC BAA-895 / CDC 4225-83 / SGSC4696), this protein is Large ribosomal subunit protein bL9.